Consider the following 305-residue polypeptide: Homoserine O-acetyltransferase (305 aa).

Cysteine 142 acts as the Acyl-thioester intermediate in catalysis. Lysine 163 and serine 192 together coordinate substrate. Residue histidine 235 is the Proton acceptor of the active site. Glutamate 237 is an active-site residue. Arginine 249 contributes to the substrate binding site.

This sequence belongs to the MetA family.

It localises to the cytoplasm. The catalysed reaction is L-homoserine + acetyl-CoA = O-acetyl-L-homoserine + CoA. Its pathway is amino-acid biosynthesis; L-methionine biosynthesis via de novo pathway; O-acetyl-L-homoserine from L-homoserine: step 1/1. Its function is as follows. Transfers an acetyl group from acetyl-CoA to L-homoserine, forming acetyl-L-homoserine. This Dinoroseobacter shibae (strain DSM 16493 / NCIMB 14021 / DFL 12) protein is Homoserine O-acetyltransferase.